The sequence spans 111 residues: Phosphoribosyl-ATP pyrophosphatase (111 aa).

It belongs to the PRA-PH family.

It localises to the cytoplasm. The catalysed reaction is 1-(5-phospho-beta-D-ribosyl)-ATP + H2O = 1-(5-phospho-beta-D-ribosyl)-5'-AMP + diphosphate + H(+). It functions in the pathway amino-acid biosynthesis; L-histidine biosynthesis; L-histidine from 5-phospho-alpha-D-ribose 1-diphosphate: step 2/9. The sequence is that of Phosphoribosyl-ATP pyrophosphatase from Pseudomonas putida (strain GB-1).